Consider the following 827-residue polypeptide: Transcription factor SOX-6 (827 aa).

Polar residues predominate over residues 1 to 10 (MSSKQATSPF). Residues 1–51 (MSSKQATSPFACTADGEEAMTQDLTSREKEEGSDQHPASHLPLHPIMHNKP) are disordered. Positions 25–34 (TSREKEEGSD) are enriched in basic and acidic residues. T119 is subject to Phosphothreonine. Residues 184–262 (LAEKERQLST…LLQQQIQVQG (79 aa)) adopt a coiled-coil conformation. Disordered regions lie at residues 334–361 (QINP…GHSY) and 379–470 (VSPG…PIGG). Positions 341–357 (GISDRFGRNLDPSEHGG) are enriched in basic and acidic residues. S399 carries the post-translational modification Phosphoserine. T401 carries the phosphothreonine modification. Glycyl lysine isopeptide (Lys-Gly) (interchain with G-Cter in SUMO) cross-links involve residues K404 and K417. 2 stretches are compositionally biased toward polar residues: residues 421 to 431 (TAQPLNLSSRP) and 439 to 461 (SPTS…LPNK). Phosphoserine is present on residues S439 and S442. Residues 620–688 (IKRPMNAFMV…IHLEKYPNYK (69 aa)) constitute a DNA-binding region (HMG box). Disordered stretches follow at residues 752-772 (TPSP…EPSL) and 786-827 (ASLA…VSAN). Acidic residues predominate over residues 795-808 (NGEDEMEAYDDYED).

In terms of assembly, homodimer. Interacts with DAZAP2. May interact with CENPK. Sumoylation inhibits the transcriptional activity. In terms of tissue distribution, highly expressed in testis.

The protein localises to the nucleus. The protein resides in the cytoplasm. In terms of biological role, transcription factor that plays a key role in several developmental processes, including neurogenesis, chondrocytes differentiation and cartilage formation. Specifically binds the 5'-AACAAT-3' DNA motif present in enhancers and super-enhancers and promotes expression of genes important for chondrogenesis. Required for overt chondrogenesis when condensed prechondrocytes differentiate into early stage chondrocytes: SOX5 and SOX6 cooperatively bind with SOX9 on active enhancers and super-enhancers associated with cartilage-specific genes, and thereby potentiate SOX9's ability to transactivate. Not involved in precartilaginous condensation, the first step in chondrogenesis, during which skeletal progenitors differentiate into prechondrocytes. Together with SOX5, required to form and maintain a pool of highly proliferating chondroblasts between epiphyses and metaphyses, to form columnar chondroblasts, delay chondrocyte prehypertrophy but promote hypertrophy, and to delay terminal differentiation of chondrocytes on contact with ossification fronts. Binds to the proximal promoter region of the myelin protein MPZ gene, and is thereby involved in the differentiation of oligodendroglia in the developing spinal tube. Binds to the gene promoter of MBP and acts as a transcriptional repressor. This is Transcription factor SOX-6 from Mus musculus (Mouse).